The sequence spans 294 residues: Probable 2-(5''-triphosphoribosyl)-3'-dephosphocoenzyme-A synthase (294 aa).

Belongs to the CitG/MdcB family.

It carries out the reaction 3'-dephospho-CoA + ATP = 2'-(5''-triphospho-alpha-D-ribosyl)-3'-dephospho-CoA + adenine. The chain is Probable 2-(5''-triphosphoribosyl)-3'-dephosphocoenzyme-A synthase from Streptococcus pyogenes serotype M28 (strain MGAS6180).